The sequence spans 385 residues: Beta-lactamase (385 aa).

The signal sequence occupies residues 1 to 20 (MKRLLAFCLLFFAALGQAKV). Catalysis depends on S84, which acts as the Acyl-ester intermediate. Y170 (proton acceptor) is an active-site residue. 335 to 337 (KTG) contacts substrate.

It belongs to the class-C beta-lactamase family.

It is found in the periplasm. The catalysed reaction is a beta-lactam + H2O = a substituted beta-amino acid. Its function is as follows. This protein is a serine beta-lactamase with a substrate specificity for cephalosporins. The polypeptide is Beta-lactamase (Lysobacter lactamgenus).